Here is a 107-residue protein sequence, read N- to C-terminus: UPF0060 membrane protein A1S_1909 (107 aa).

4 consecutive transmembrane segments (helical) span residues 2–22 (FGLFIITAIAEILGCYFPYLI), 28–48 (SAWLWLPTALSLAVFVWLLTL), 56–76 (IYAAYGGIYIFTALMWLRFVD), and 85–105 (ILGGVIVLCGAGLIILQPQGL).

Belongs to the UPF0060 family.

The protein resides in the cell inner membrane. This chain is UPF0060 membrane protein A1S_1909, found in Acinetobacter baumannii (strain ATCC 17978 / DSM 105126 / CIP 53.77 / LMG 1025 / NCDC KC755 / 5377).